The primary structure comprises 346 residues: Probable alpha-1,2-galactosyltransferase gmh2 (346 aa).

The Cytoplasmic segment spans residues 1 to 11; sequence MALMLSRIPRR. Residues 12–32 form a helical; Signal-anchor for type II membrane protein membrane-spanning segment; the sequence is FFFLFLTVGLIAGAFLYSLIY. At 33-346 the chain is on the lumenal side; the sequence is FVDVDLVSKV…LWQKFYALID (314 aa). Residues Asn64, Asn142, and Asn224 are each glycosylated (N-linked (GlcNAc...) asparagine).

It belongs to the glycosyltransferase 34 family.

It is found in the golgi apparatus membrane. This is Probable alpha-1,2-galactosyltransferase gmh2 (gmh2) from Schizosaccharomyces pombe (strain 972 / ATCC 24843) (Fission yeast).